Consider the following 258-residue polypeptide: Hydroxyethylthiazole kinase (258 aa).

Residue Met37 coordinates substrate. ATP contacts are provided by Arg112 and Thr158. Ala185 contacts substrate.

This sequence belongs to the Thz kinase family. The cofactor is Mg(2+).

The enzyme catalyses 5-(2-hydroxyethyl)-4-methylthiazole + ATP = 4-methyl-5-(2-phosphooxyethyl)-thiazole + ADP + H(+). Its pathway is cofactor biosynthesis; thiamine diphosphate biosynthesis; 4-methyl-5-(2-phosphoethyl)-thiazole from 5-(2-hydroxyethyl)-4-methylthiazole: step 1/1. Catalyzes the phosphorylation of the hydroxyl group of 4-methyl-5-beta-hydroxyethylthiazole (THZ). The chain is Hydroxyethylthiazole kinase from Rhizobium etli (strain ATCC 51251 / DSM 11541 / JCM 21823 / NBRC 15573 / CFN 42).